Reading from the N-terminus, the 232-residue chain is MNLPPLTPATLIRRYKRFLADCALASGEIITVHCPNSGSMRSCAEPGQPILISQSGNPKRKLPWTWELYWSGASWVCINTQHPNAVVAEAIAAGDIPALQNYAQLRREVPYGSHERVDVLLSSEGRPPCYVEVKSCTLLEEDGVIRFPDAVSSRALRHLGALTEVVRGGGRAVMLFLIGREDGRGFAPADAIDPAYGKALRRARTDGVEILAYRTRLSPDKISLSVAEPLLF.

The protein belongs to the SfsA family.

This Acidithiobacillus ferrooxidans (strain ATCC 23270 / DSM 14882 / CIP 104768 / NCIMB 8455) (Ferrobacillus ferrooxidans (strain ATCC 23270)) protein is Sugar fermentation stimulation protein homolog.